The chain runs to 299 residues: tRNA pseudouridine synthase B (299 aa).

Residue Asp38 is the Nucleophile of the active site.

Belongs to the pseudouridine synthase TruB family. Type 1 subfamily.

The enzyme catalyses uridine(55) in tRNA = pseudouridine(55) in tRNA. Functionally, responsible for synthesis of pseudouridine from uracil-55 in the psi GC loop of transfer RNAs. In Pediococcus pentosaceus (strain ATCC 25745 / CCUG 21536 / LMG 10740 / 183-1w), this protein is tRNA pseudouridine synthase B.